We begin with the raw amino-acid sequence, 86 residues long: Sodium channel neurotoxin MeuNaTxalpha-5 (86 aa).

Residues 1-19 (MNYLILISFALLVITGVES) form the signal peptide. The region spanning 21–85 (RDAYIAKPHN…VPIRIPGKCH (65 aa)) is the LCN-type CS-alpha/beta domain. Disulfide bonds link C31–C84, C35–C57, C43–C67, and C47–C69. R86 is a propeptide (removed by a carboxypeptidase).

Belongs to the long (4 C-C) scorpion toxin superfamily. Sodium channel inhibitor family. Alpha subfamily. As to expression, expressed by the venom gland.

It is found in the secreted. In terms of biological role, alpha toxins bind voltage-independently at site-3 of sodium channels (Nav) and inhibit the inactivation of the activated channels, thereby blocking neuronal transmission. This toxin inhibits inactivation of Nav1.6/SCN8A (EC(50)=790 nM) and drosophila DmNav1 (EC(50)=280 nM). The toxin (1 uM) does not significantly shift the midpoint of activation at the two channels, but induces a significant depolarizing shift in the V(1/2) of inactivation of the channels. Has antimicrobial activity. The polypeptide is Sodium channel neurotoxin MeuNaTxalpha-5 (Mesobuthus eupeus (Lesser Asian scorpion)).